The following is a 112-amino-acid chain: Tyrosine-protein phosphatase 17 (112 aa).

Residues Trp-1 to Val-112 form the Tyrosine-protein phosphatase domain. Asp-82 lines the substrate pocket.

It belongs to the protein-tyrosine phosphatase family.

The enzyme catalyses O-phospho-L-tyrosyl-[protein] + H2O = L-tyrosyl-[protein] + phosphate. This chain is Tyrosine-protein phosphatase 17 (STY-17), found in Styela plicata (Wrinkled sea squirt).